A 779-amino-acid polypeptide reads, in one-letter code: Kazrin (779 aa).

Positions 79–261 (AQVLLREEVV…LATLTKDVPK (183 aa)) form a coiled coil. The tract at residues 295–366 (QQTLYHSHPP…PGPVQKSLHN (72 aa)) is disordered. Residues S356, S371, and S391 each carry the phosphoserine modification. The tract at residues 403 to 429 (KSLDPGLFDDSDSQCSPTRHSLSLSEG) is disordered. Over residues 415–426 (SQCSPTRHSLSL) the composition is skewed to polar residues. SAM domains are found at residues 450–515 (WKAG…YRDA), 528–592 (DHHW…LYQV), and 616–683 (WTNQ…STIF). The tract at residues 685–779 (PSNSTGIRES…GYGSLEVTNV (95 aa)) is disordered. Residues 736 to 746 (SSKEPDFHDDY) show a composition bias toward basic and acidic residues.

Belongs to the kazrin family. As to expression, expressed in skin interfollicular epidermis and hair follicles. Expressed in tongue epithelium basal suprabasal layers.

Its subcellular location is the cell junction. It is found in the nucleus. It localises to the cytoplasm. The protein localises to the cytoskeleton. Its function is as follows. Component of the cornified envelope of keratinocytes. May be involved in the interplay between adherens junctions and desmosomes. The function in the nucleus is not known. This is Kazrin (Kazn) from Mus musculus (Mouse).